Reading from the N-terminus, the 172-residue chain is Ly6/PLAUR domain-containing protein 6B (172 aa).

A signal peptide spans 1–25 (MLLLCHILAVTILQILIISENWVFA). The region spanning 46 to 137 (FKCFTCENAG…VELPTNHTNA (92 aa)) is the UPAR/Ly6 domain. The sufficient for inhibiting alpha-7 nAChR currents stretch occupies residues 46–140 (FKCFTCENAG…PTNHTNAVFA (95 aa)). Cystine bridges form between Cys-48–Cys-76, Cys-51–Cys-60, Cys-69–Cys-95, Cys-101–Cys-120, Cys-106–Cys-117, and Cys-121–Cys-126. Residue Ser-148 is the site of GPI-anchor amidated serine attachment. Residues 149-172 (GSSVSSVPSPYLLVLAWLFMLPLL) constitute a propeptide, removed in mature form.

The protein localises to the cell membrane. In terms of biological role, likely acts as a modulator of nicotinic acetylcholine receptors (nAChRs) activity. In vitro acts on nAChRs in a subtype- and stoichiometry-dependent manner. Modulates specifically alpha-3(3):beta-4(2) nAChRs by enhancing the sensitivity to ACh, decreasing ACh-induced maximal current response and increasing the rate of desensitization to ACh; has no effect on alpha-7 homomeric nAChRs; modulates alpha-3(2):alpha-5:beta-4(2) nAChRs in the context of CHRNA5/alpha-5 variant Asn-398 but not its wild-type sequence. However, according to another report in vitro it can weakly inhibits alpha-7 nAChRs. This Mus musculus (Mouse) protein is Ly6/PLAUR domain-containing protein 6B (Lypd6b).